We begin with the raw amino-acid sequence, 37 residues long: Cytochrome b6-f complex subunit 7 (37 aa).

The helical transmembrane segment at A11–L29 threads the bilayer.

This sequence belongs to the PetM family. The 4 large subunits of the cytochrome b6-f complex are cytochrome b6, subunit IV (17 kDa polypeptide, PetD), cytochrome f and the Rieske protein, while the 4 small subunits are PetG, PetL, PetM and PetN. The complex functions as a dimer.

It is found in the cellular thylakoid membrane. Functionally, component of the cytochrome b6-f complex, which mediates electron transfer between photosystem II (PSII) and photosystem I (PSI), cyclic electron flow around PSI, and state transitions. The chain is Cytochrome b6-f complex subunit 7 from Gloeothece citriformis (strain PCC 7424) (Cyanothece sp. (strain PCC 7424)).